Here is a 1273-residue protein sequence, read N- to C-terminus: DNA-directed RNA polymerase subunit beta (1273 aa).

It belongs to the RNA polymerase beta chain family. In terms of assembly, the RNAP catalytic core consists of 2 alpha, 1 beta, 1 beta' and 1 omega subunit. When a sigma factor is associated with the core the holoenzyme is formed, which can initiate transcription.

It carries out the reaction RNA(n) + a ribonucleoside 5'-triphosphate = RNA(n+1) + diphosphate. In terms of biological role, DNA-dependent RNA polymerase catalyzes the transcription of DNA into RNA using the four ribonucleoside triphosphates as substrates. The polypeptide is DNA-directed RNA polymerase subunit beta (Aster yellows witches'-broom phytoplasma (strain AYWB)).